The sequence spans 142 residues: Small ribosomal subunit protein uS12 (142 aa).

Belongs to the universal ribosomal protein uS12 family. Part of the 30S ribosomal subunit.

With S4 and S5 plays an important role in translational accuracy. Located at the interface of the 30S and 50S subunits. The polypeptide is Small ribosomal subunit protein uS12 (Methanospirillum hungatei JF-1 (strain ATCC 27890 / DSM 864 / NBRC 100397 / JF-1)).